A 548-amino-acid chain; its full sequence is Phenylalanine--tRNA ligase beta subunit (548 aa).

In terms of domain architecture, B5 spans 275-350 (LKEDVLETTS…IAYGYNKFSG (76 aa)). Asp-328, Asp-334, Glu-337, and Glu-338 together coordinate Mg(2+).

Belongs to the phenylalanyl-tRNA synthetase beta subunit family. Type 2 subfamily. In terms of assembly, tetramer of two alpha and two beta subunits. The cofactor is Mg(2+).

The protein resides in the cytoplasm. It carries out the reaction tRNA(Phe) + L-phenylalanine + ATP = L-phenylalanyl-tRNA(Phe) + AMP + diphosphate + H(+). This is Phenylalanine--tRNA ligase beta subunit from Methanocaldococcus jannaschii (strain ATCC 43067 / DSM 2661 / JAL-1 / JCM 10045 / NBRC 100440) (Methanococcus jannaschii).